A 410-amino-acid polypeptide reads, in one-letter code: Elongation factor Tu (410 aa).

The tr-type G domain maps to 10–214 (KPHVNIGTIG…EVDAYIPTPE (205 aa)). Residues 19–26 (GHVDHGKT) are G1. 19-26 (GHVDHGKT) contributes to the GTP binding site. Residue T26 coordinates Mg(2+). Positions 60–64 (GITIN) are G2. Residues 81–84 (DCPG) form a G3 region. GTP is bound by residues 81 to 85 (DCPGH) and 136 to 139 (NKAD). The G4 stretch occupies residues 136–139 (NKAD). The interval 174-176 (SAL) is G5.

The protein belongs to the TRAFAC class translation factor GTPase superfamily. Classic translation factor GTPase family. EF-Tu/EF-1A subfamily. Monomer.

The protein localises to the cytoplasm. It catalyses the reaction GTP + H2O = GDP + phosphate + H(+). In terms of biological role, GTP hydrolase that promotes the GTP-dependent binding of aminoacyl-tRNA to the A-site of ribosomes during protein biosynthesis. This Arthrospira platensis (Spirulina platensis) protein is Elongation factor Tu.